Consider the following 86-residue polypeptide: Anti-adapter protein IraP (86 aa).

The stretch at Met1–Arg38 forms a coiled coil.

Belongs to the IraP family. Interacts with RssB.

It localises to the cytoplasm. In terms of biological role, inhibits RpoS proteolysis by regulating RssB activity, thereby increasing the stability of the sigma stress factor RpoS especially during phosphate starvation, but also in stationary phase and during nitrogen starvation. Its effect on RpoS stability is due to its interaction with RssB, which probably blocks the interaction of RssB with RpoS, and the consequent delivery of the RssB-RpoS complex to the ClpXP protein degradation pathway. The chain is Anti-adapter protein IraP from Klebsiella pneumoniae subsp. pneumoniae (strain ATCC 700721 / MGH 78578).